The following is a 108-amino-acid chain: Putative bolA-like protein K11H12.1 (108 aa).

Residues 89 to 108 form a disordered region; sequence SKWDGQKQEDSPTCRGGFGK.

It belongs to the BolA/IbaG family.

This chain is Putative bolA-like protein K11H12.1, found in Caenorhabditis elegans.